A 304-amino-acid polypeptide reads, in one-letter code: Quinolinate synthase (304 aa).

Iminosuccinate is bound by residues His23 and Ser40. Cys86 serves as a coordination point for [4Fe-4S] cluster. Residues 112–114 (YVN) and Ser129 contribute to the iminosuccinate site. Cys173 contacts [4Fe-4S] cluster. Iminosuccinate-binding positions include 199–201 (HPE) and Thr216. [4Fe-4S] cluster is bound at residue Cys260.

It belongs to the quinolinate synthase family. Type 2 subfamily. [4Fe-4S] cluster is required as a cofactor.

Its subcellular location is the cytoplasm. It carries out the reaction iminosuccinate + dihydroxyacetone phosphate = quinolinate + phosphate + 2 H2O + H(+). It participates in cofactor biosynthesis; NAD(+) biosynthesis; quinolinate from iminoaspartate: step 1/1. In terms of biological role, catalyzes the condensation of iminoaspartate with dihydroxyacetone phosphate to form quinolinate. The polypeptide is Quinolinate synthase (Methanothermobacter thermautotrophicus (strain ATCC 29096 / DSM 1053 / JCM 10044 / NBRC 100330 / Delta H) (Methanobacterium thermoautotrophicum)).